The primary structure comprises 162 residues: UPF0102 protein Bpet0439 (162 aa).

Residues 15–52 (QAQQRQMKRRRAAAHRAARGPAPARAPRASPTQRTGTA) form a disordered region. Positions 20–32 (QMKRRRAAAHRAA) are enriched in basic residues. Residues 33–48 (RGPAPARAPRASPTQR) show a composition bias toward low complexity.

Belongs to the UPF0102 family.

The polypeptide is UPF0102 protein Bpet0439 (Bordetella petrii (strain ATCC BAA-461 / DSM 12804 / CCUG 43448)).